Reading from the N-terminus, the 443-residue chain is MIMMTRFAPSPTGYLHVGNVRTALICWLYTRSKQGRFLLRFDDTDLQRSKDDYRNEIANDLKWLQMDWDFDVRQSSRFDRYDEIFNYLLKEELIYPCYESKEELDFKRKMQLKLGLPPIYDRSALKLTQDEKNKYSERDVYFRFKIDQSQLISWDDEIRGKVSFNAANISDPIVKRADGTYTYMLPSVIDDIDFDITHIVRGEDHISNTAIQIQMFNALKASVPTFSHLSLLYCDDNKISKRVGGFSIKDMQFYELEPMAINSYFAKIGTSDPIVVHTKIQDLIYTFDITKFNQAPTQFNIDDVIKLNPKVLHKMSFSDVKLRLSELNITSPDLWDFVSGNVQKFSDIKEWIRICGQTTVPVINESDQDFIKMALSVFPNGEINQDTWKTWVANIKEKTDRKSKDIFIPLRLALTGISTGPELAKLLPILGRAEIIRRLGYSR.

Positions Pro-9–Asn-19 match the 'HIGH' region motif. Positions Lys-238–Arg-242 match the 'KMSKS' region motif. Residue Lys-241 participates in ATP binding.

This sequence belongs to the class-I aminoacyl-tRNA synthetase family. Glutamate--tRNA ligase type 1 subfamily. As to quaternary structure, monomer.

The protein resides in the cytoplasm. The catalysed reaction is tRNA(Glu) + L-glutamate + ATP = L-glutamyl-tRNA(Glu) + AMP + diphosphate. In terms of biological role, catalyzes the attachment of glutamate to tRNA(Glu) in a two-step reaction: glutamate is first activated by ATP to form Glu-AMP and then transferred to the acceptor end of tRNA(Glu). This is Glutamate--tRNA ligase 1 from Ehrlichia ruminantium (strain Welgevonden).